A 372-amino-acid polypeptide reads, in one-letter code: Glutamate 5-kinase (372 aa).

Lysine 14 serves as a coordination point for ATP. Residues serine 54, aspartate 141, and asparagine 153 each coordinate substrate. 173–174 (TD) is an ATP binding site. The 79-residue stretch at 280–358 (RGTLVLDDGA…DAIEALLGYV (79 aa)) folds into the PUA domain.

It belongs to the glutamate 5-kinase family.

Its subcellular location is the cytoplasm. The enzyme catalyses L-glutamate + ATP = L-glutamyl 5-phosphate + ADP. It functions in the pathway amino-acid biosynthesis; L-proline biosynthesis; L-glutamate 5-semialdehyde from L-glutamate: step 1/2. Its function is as follows. Catalyzes the transfer of a phosphate group to glutamate to form L-glutamate 5-phosphate. This Pseudomonas paraeruginosa (strain DSM 24068 / PA7) (Pseudomonas aeruginosa (strain PA7)) protein is Glutamate 5-kinase.